We begin with the raw amino-acid sequence, 597 residues long: MGKGTDKLYITHSEWSSSDAYGASTGANAGARAQRRGASFKKLPFNFCAASLQPFKNPVCTPDGTIFDVEVIGSWLEKHKTNPVTGEPLSAKDLIKLNFARNGDTTDSDENKGDLIDPVTFKVFTDNTHIVAIRHGSYANVFAWETVERMNIKPKMWRDLVDDEEFGRRDIITLQDPQNVSASRDLSQFKYLQDGQDAILTKEQEEERKGGTVNIEALGRVGEKVLRAKEAVERARAARQAGGADVNRLTQALTTTSTNSATNNNKTAIARGQSLIQERKRPANAATYTTGLTAASFTSTGLTPSTSGSLALLSDEQYLLKPSHRIKNKGYVRMETNLGPLTLELLPEFAPKAVWNFLRLSEKGYYRDVAFHRSIRNFMIQGGDPSGTGRGGSSIWGKNFEDEFEGPNTHSARGIVSMANKGKNTNSSQFFITYRPASHLDRKHTIFAKVIEGQDTTLTAMENVATDGSDRPLNKIVIKDMIILIDPFAEWMKEKKQKEGEEERKREVARQGGTEDDRTTWTGKRIRADGTMEGQGMGEGGGGGPKVGKYLDVGAVKKAATTTTTTTRKAEEEEVDTWEEPVRKKAKMGGFGNFDGW.

The 74-residue stretch at 41-114 folds into the U-box domain; the sequence is KKLPFNFCAA…TTDSDENKGD (74 aa). Residues 328–483 enclose the PPIase cyclophilin-type domain; the sequence is NKGYVRMETN…NKIVIKDMII (156 aa). Basic and acidic residues predominate over residues 495–519; sequence KKQKEGEEERKREVARQGGTEDDRT. Disordered stretches follow at residues 495 to 521 and 560 to 597; these read KKQK…RTTW and ATTT…FDGW.

Belongs to the cyclophilin-type PPIase family. PPIL2 subfamily.

The protein resides in the nucleus. It catalyses the reaction [protein]-peptidylproline (omega=180) = [protein]-peptidylproline (omega=0). The catalysed reaction is S-ubiquitinyl-[E2 ubiquitin-conjugating enzyme]-L-cysteine + [acceptor protein]-L-lysine = [E2 ubiquitin-conjugating enzyme]-L-cysteine + N(6)-ubiquitinyl-[acceptor protein]-L-lysine.. It participates in protein modification; protein ubiquitination. In terms of biological role, may catalyze the cis-trans isomerization of proline imidic peptide bonds in oligopeptides thereby assisting the folding of proteins. May also function as a chaperone, playing a role in intracellular transport of proteins. May also have a protein ubiquitin ligase activity acting as an E3 ubiquitin protein ligase or as a ubiquitin-ubiquitin ligase promoting elongation of ubiquitin chains on proteins. The chain is Peptidyl-prolyl cis-trans isomerase-like 2 (ppi-2) from Neurospora crassa (strain ATCC 24698 / 74-OR23-1A / CBS 708.71 / DSM 1257 / FGSC 987).